Here is a 288-residue protein sequence, read N- to C-terminus: AA9 family lytic polysaccharide monooxygenase A (288 aa).

The signal sequence occupies residues 1–22 (MKSTSATKFSVLAAATFAAAHG). Residues His-21 and His-104 each contribute to the Cu(2+) site. 2 disulfide bridges follow: Cys-74/Cys-191 and Cys-115/Cys-119. Asn-151 carries N-linked (GlcNAc...) asparagine glycosylation. 2 residues coordinate O2: His-177 and Gln-186. Tyr-188 serves as a coordination point for Cu(2+). Residues 236 to 270 (PEPYKSGSGSSDNAAEAVSSAAAEEPAAAATSAAA) are disordered. Positions 249–270 (AAEAVSSAAAEEPAAAATSAAA) are enriched in low complexity.

This sequence belongs to the polysaccharide monooxygenase AA9 family. The cofactor is Cu(2+).

Its subcellular location is the secreted. It catalyses the reaction [(1-&gt;4)-beta-D-glucosyl]n+m + reduced acceptor + O2 = 4-dehydro-beta-D-glucosyl-[(1-&gt;4)-beta-D-glucosyl]n-1 + [(1-&gt;4)-beta-D-glucosyl]m + acceptor + H2O.. Functionally, lytic polysaccharide monooxygenase (LPMO) that depolymerizes crystalline and amorphous polysaccharides via the oxidation of scissile alpha- or beta-(1-4)-glycosidic bonds, yielding C1 and C4 oxidation products. Catalysis by LPMOs requires the reduction of the active-site copper from Cu(II) to Cu(I) by a reducing agent and H(2)O(2) or O(2) as a cosubstrate. Active on cellulose and on xyloglucan for deconstruction of plant biomass. The polypeptide is AA9 family lytic polysaccharide monooxygenase A (Geotrichum candidum (Oospora lactis)).